The chain runs to 25 residues: Fibrinolytic enzyme large subunit (25 aa).

The 25-residue stretch at 1–25 (VIGGTNASPGEIPWQLSQQRQSGSW) folds into the Peptidase S1 domain. The segment at 1–25 (VIGGTNASPGEIPWQLSQQRQSGSW) is disordered. Over residues 15-25 (QLSQQRQSGSW) the composition is skewed to polar residues.

The protein belongs to the peptidase S1 family. As to quaternary structure, heterodimer of a large and a small subunit held together by hydrophobic interactions.

In terms of biological role, cleaves the carboxyl side of basic amino acids, small neutral amino acids, and Met residue. It is also a plasminogen activator. This Eisenia fetida (Red wiggler worm) protein is Fibrinolytic enzyme large subunit.